Here is a 390-residue protein sequence, read N- to C-terminus: DNA polymerase IV (390 aa).

One can recognise a UmuC domain in the interval 6–187 (VMHVDLDAFF…LDIAVMPGIG (182 aa)). The Mg(2+) site is built by Asp10 and Asp105. Glu106 is an active-site residue.

This sequence belongs to the DNA polymerase type-Y family. Monomer. Requires Mg(2+) as cofactor.

Its subcellular location is the cytoplasm. It catalyses the reaction DNA(n) + a 2'-deoxyribonucleoside 5'-triphosphate = DNA(n+1) + diphosphate. Poorly processive, error-prone DNA polymerase involved in untargeted mutagenesis. Copies undamaged DNA at stalled replication forks, which arise in vivo from mismatched or misaligned primer ends. These misaligned primers can be extended by PolIV. Exhibits no 3'-5' exonuclease (proofreading) activity. May be involved in translesional synthesis, in conjunction with the beta clamp from PolIII. This chain is DNA polymerase IV, found in Dehalococcoides mccartyi (strain CBDB1).